A 427-amino-acid polypeptide reads, in one-letter code: 3-phosphoshikimate 1-carboxyvinyltransferase (427 aa).

Positions 22, 23, and 27 each coordinate 3-phosphoshikimate. Lys22 contributes to the phosphoenolpyruvate binding site. Gly96 and Arg124 together coordinate phosphoenolpyruvate. Positions 170, 171, 172, 198, 314, 337, and 341 each coordinate 3-phosphoshikimate. Residue Gln172 coordinates phosphoenolpyruvate. The active-site Proton acceptor is the Asp314. Residues Arg345, Arg387, and Lys412 each contribute to the phosphoenolpyruvate site.

This sequence belongs to the EPSP synthase family. In terms of assembly, monomer.

It localises to the cytoplasm. It catalyses the reaction 3-phosphoshikimate + phosphoenolpyruvate = 5-O-(1-carboxyvinyl)-3-phosphoshikimate + phosphate. The protein operates within metabolic intermediate biosynthesis; chorismate biosynthesis; chorismate from D-erythrose 4-phosphate and phosphoenolpyruvate: step 6/7. Functionally, catalyzes the transfer of the enolpyruvyl moiety of phosphoenolpyruvate (PEP) to the 5-hydroxyl of shikimate-3-phosphate (S3P) to produce enolpyruvyl shikimate-3-phosphate and inorganic phosphate. The protein is 3-phosphoshikimate 1-carboxyvinyltransferase of Tolumonas auensis (strain DSM 9187 / NBRC 110442 / TA 4).